Reading from the N-terminus, the 279-residue chain is 3-methyl-2-oxobutanoate hydroxymethyltransferase (279 aa).

Residues aspartate 43 and aspartate 82 each contribute to the Mg(2+) site. Residues aspartate 43–serine 44, aspartate 82, and lysine 112 contribute to the 3-methyl-2-oxobutanoate site. Glutamate 114 provides a ligand contact to Mg(2+). The Proton acceptor role is filled by glutamate 181.

This sequence belongs to the PanB family. In terms of assembly, homodecamer; pentamer of dimers. It depends on Mg(2+) as a cofactor.

The protein localises to the cytoplasm. The catalysed reaction is 3-methyl-2-oxobutanoate + (6R)-5,10-methylene-5,6,7,8-tetrahydrofolate + H2O = 2-dehydropantoate + (6S)-5,6,7,8-tetrahydrofolate. Its pathway is cofactor biosynthesis; (R)-pantothenate biosynthesis; (R)-pantoate from 3-methyl-2-oxobutanoate: step 1/2. In terms of biological role, catalyzes the reversible reaction in which hydroxymethyl group from 5,10-methylenetetrahydrofolate is transferred onto alpha-ketoisovalerate to form ketopantoate. This Geobacillus sp. (strain WCH70) protein is 3-methyl-2-oxobutanoate hydroxymethyltransferase.